An 859-amino-acid chain; its full sequence is Leucine--tRNA ligase (859 aa).

The 'HIGH' region signature appears at 43–53 (PYPSGRIHMGH). The 'KMSKS' region motif lies at 614–618 (KMSKS). Position 617 (Lys-617) interacts with ATP.

This sequence belongs to the class-I aminoacyl-tRNA synthetase family.

The protein localises to the cytoplasm. It carries out the reaction tRNA(Leu) + L-leucine + ATP = L-leucyl-tRNA(Leu) + AMP + diphosphate. This Magnetococcus marinus (strain ATCC BAA-1437 / JCM 17883 / MC-1) protein is Leucine--tRNA ligase.